The chain runs to 715 residues: Serine/arginine repetitive matrix protein 5 (715 aa).

Over residues 1 to 13 (MSSPKRSSKPSMS) the composition is skewed to low complexity. The disordered stretch occupies residues 1–715 (MSSPKRSSKP…RSSSSSSKLA (715 aa)). Positions 32–59 (LKSTKSATPNRSLVPTKPATSRNSVMSP) are enriched in polar residues. Over residues 60–79 (SSSKSTKSTSTKRAPSNRPS) the composition is skewed to low complexity. Positions 80-90 (SRSRVRSKART) are enriched in basic residues. Over residues 92-104 (SRVSTDTRTSKAS) the composition is skewed to polar residues. Residues 112–136 (HQRRGTHSRGRTPGRRGSRSSKRSP) are compositionally biased toward basic residues. Composition is skewed to polar residues over residues 213–224 (TPSTAKCQTPTG) and 257–272 (YSPT…YNQA). Residues 273–285 (STRSRPQSHSQSR) are compositionally biased toward low complexity. A compositionally biased stretch (basic residues) spans 286-320 (SPRRSRSGSQKRTHSRVRSHSWKRNHSRARSRTRK). Composition is skewed to basic and acidic residues over residues 359–388 (PSKE…KESG) and 397–521 (KQRD…ERDH). Over residues 522 to 536 (RRSRSPSKERQRRQS) the composition is skewed to basic residues. 2 stretches are compositionally biased toward basic and acidic residues: residues 539–595 (PNKE…DHSR) and 611–628 (SSKE…KEGN). Positions 657 to 666 (TRTSSLSQNR) are enriched in polar residues. Low complexity predominate over residues 667 to 681 (TPSKTSSHSPSTFPS). A compositionally biased stretch (polar residues) spans 682-715 (GGQTLSQDDSQADATTSKATLPGERSSSSSSKLA).

The chain is Serine/arginine repetitive matrix protein 5 (SRRM5) from Homo sapiens (Human).